Here is a 556-residue protein sequence, read N- to C-terminus: Guanosine-diphosphatase (556 aa).

Over 1–12 (MTPTMKSIARRK) the chain is Cytoplasmic. A helical; Signal-anchor for type II membrane protein membrane pass occupies residues 13 to 33 (ALLIALSIFAVTFILWNGFPG). Topologically, residues 34 to 556 (SSNRPLPSSN…GWNCNVKEEI (523 aa)) are lumenal. E256 acts as the Proton acceptor in catalysis. N-linked (GlcNAc...) asparagine glycosylation is present at N372.

It belongs to the GDA1/CD39 NTPase family. Ca(2+) is required as a cofactor. Requires Mn(2+) as cofactor.

The protein localises to the golgi apparatus membrane. The catalysed reaction is GDP + H2O = GMP + phosphate + H(+). The protein operates within protein modification; protein glycosylation. After transfer of sugars to endogenous macromolecular acceptors, the enzyme converts nucleoside diphosphates to nucleoside monophosphates which in turn exit the Golgi lumen in a coupled antiporter reaction, allowing entry of additional nucleotide sugar from the cytosol. This chain is Guanosine-diphosphatase (gdp1), found in Schizosaccharomyces pombe (strain 972 / ATCC 24843) (Fission yeast).